The chain runs to 116 residues: Small ribosomal subunit protein uS13 (116 aa).

A disordered region spans residues 92–116 (RRGLPVRGQNTKNNARTRKGAKRSR). Residues 106 to 116 (ARTRKGAKRSR) are compositionally biased toward basic residues.

Belongs to the universal ribosomal protein uS13 family. As to quaternary structure, part of the 30S ribosomal subunit. Forms a loose heterodimer with protein S19. Forms two bridges to the 50S subunit in the 70S ribosome.

Functionally, located at the top of the head of the 30S subunit, it contacts several helices of the 16S rRNA. In the 70S ribosome it contacts the 23S rRNA (bridge B1a) and protein L5 of the 50S subunit (bridge B1b), connecting the 2 subunits; these bridges are implicated in subunit movement. Contacts the tRNAs in the A and P-sites. The chain is Small ribosomal subunit protein uS13 from Lactobacillus delbrueckii subsp. bulgaricus (strain ATCC 11842 / DSM 20081 / BCRC 10696 / JCM 1002 / NBRC 13953 / NCIMB 11778 / NCTC 12712 / WDCM 00102 / Lb 14).